Consider the following 179-residue polypeptide: Large ribosomal subunit protein bL27c (179 aa).

A chloroplast-targeting transit peptide spans 1 to 51 (MAVSFSLVGAFKGLSLASSSSFLKGDFGAAFPVAPKFSVSFPLKSPLTIES).

This sequence belongs to the bacterial ribosomal protein bL27 family. As to quaternary structure, part of the 50S ribosomal subunit.

The protein resides in the plastid. Its subcellular location is the chloroplast. This Nicotiana tabacum (Common tobacco) protein is Large ribosomal subunit protein bL27c (RPL27).